Here is a 994-residue protein sequence, read N- to C-terminus: Regulator of telomere elongation helicase 1 homolog (994 aa).

The Helicase ATP-binding domain maps to 15-324; it reads SKTSIKFPFE…KLIENLRTED (310 aa). 50 to 57 provides a ligand contact to ATP; it reads SPTGTGKT. [4Fe-4S] cluster is bound by residues cysteine 142, cysteine 160, cysteine 169, and cysteine 208. The DEAH box signature appears at 251–254; that stretch reads DEAH. A compositionally biased stretch (basic and acidic residues) spans 818–831; the sequence is KIEKKEKIEPRPIK. The interval 818 to 896 is disordered; sequence KIEKKEKIEP…HVVSGSEPPK (79 aa). Polar residues predominate over residues 833 to 844; that stretch reads DSSSSSVFSLPT. Basic and acidic residues predominate over residues 847-856; that stretch reads DELKVKKWEQ. Polar residues-rich tracts occupy residues 859 to 869 and 880 to 889; these read DSQTNVSSSSD and PGNSSGQHVV.

Belongs to the helicase family. RAD3/XPD subfamily.

The protein localises to the nucleus. The enzyme catalyses ATP + H2O = ADP + phosphate + H(+). In terms of biological role, a probable ATP-dependent DNA helicase implicated in DNA repair and the maintenance of genomic stability. Acts as an anti-recombinase to counteract toxic recombination and limit crossover during meiosis. Regulates meiotic recombination and crossover homeostasis by physically dissociating strand invasion events and thereby promotes noncrossover repair by meiotic synthesis dependent strand annealing (SDSA) as well as disassembly of D loop recombination intermediates. The sequence is that of Regulator of telomere elongation helicase 1 homolog from Caenorhabditis briggsae.